Reading from the N-terminus, the 307-residue chain is MSIPDDKEAGTIDEFLQKEGVLDILQKLDHDLVGLKPVKDRVREIAALLVVDKLRSRLGLTGTTPSLHMAFTGSPGTGKTTVAMRMGQILKAMGYSRSGHLIVATRDDLVGQYVGHTAPKTKEVIKRAFGGVLFIDEAYYLYNAANDRDYGVEAIEILLNVMEEQREDLVVIFAGYEDRMNKFYSYIPGISSRIGNHISFPDYTLEELVDIAKVMVRDMEYRIADDAIPACRAYIEKRMQMPYFSNARTVRNLINRARMRSAIRIFNKAMDPNADGLVSRDELMTLITEDFPTVQELLERGETAIVE.

The N-terminal 46 residues, 1–46 (MSIPDDKEAGTIDEFLQKEGVLDILQKLDHDLVGLKPVKDRVREIA), are a transit peptide targeting the chloroplast. 73–80 (GSPGTGKT) is an ATP binding site.

The protein belongs to the CbxX/CfxQ family. As to quaternary structure, forms homooligomers. Forms heterohexameric rings with the plastid-encoded Rca subunit consisting of 3 of each nuclear- and plastidial-encoded subunits that alternate in the ring.

The protein resides in the plastid. It localises to the chloroplast. Its function is as follows. Required for the expression of ribulose 1,5-bisphosphate carboxylase/oxygenase (RuBisCo). ATPase involved in the activation of red-type RuBisCo, which tends to form inactive complexes with its substrate ribulose 1,5-bisphosphate (RuBP). Catalyzes the release of RuBP from inhibited RuBisCo in an ATP-dependent manner. Activation of RuBisCO involves the ATP-dependent carboxylation of the epsilon-amino group of lysine leading to a carbamate structure. The nuclear-encoded subunit plays a more critical role in activase function than the plastidial-encoded subunit. The polypeptide is Ribulose bisphosphate carboxylase/oxygenase activase, chloroplastic (Cyanidioschyzon merolae (strain NIES-3377 / 10D) (Unicellular red alga)).